Here is a 505-residue protein sequence, read N- to C-terminus: T-cell activation GTPase-activating protein 1 (505 aa).

Disordered stretches follow at residues Asp81 to Ser147, Gln160 to Thr212, Gln242 to Ile293, Arg311 to Ser339, and Lys414 to Ser441. The segment covering Ser90–Asp102 has biased composition (polar residues). A compositionally biased stretch (acidic residues) spans Glu203–Thr212. Over residues Ser250–Pro262 the composition is skewed to low complexity. 2 stretches are compositionally biased toward basic and acidic residues: residues Lys283–Glu292 and Glu318–Ser336.

The protein is T-cell activation GTPase-activating protein 1 (Tagap1) of Mus musculus (Mouse).